The sequence spans 605 residues: DNA primase (605 aa).

The CHC2-type zinc-finger motif lies at 38 to 62 (CPFHDEKTPSFTVSEDKQICHCFGC). Positions 260–341 (DEIVLLEGFM…NVFVIQLPSG (82 aa)) constitute a Toprim domain. Mg(2+) is bound by residues Glu266, Asp310, and Asp312.

This sequence belongs to the DnaG primase family. In terms of assembly, monomer. Interacts with DnaB. Zn(2+) serves as cofactor. It depends on Mg(2+) as a cofactor.

It catalyses the reaction ssDNA + n NTP = ssDNA/pppN(pN)n-1 hybrid + (n-1) diphosphate.. RNA polymerase that catalyzes the synthesis of short RNA molecules used as primers for DNA polymerase during DNA replication. This chain is DNA primase, found in Staphylococcus aureus (strain Mu50 / ATCC 700699).